Consider the following 275-residue polypeptide: Low affinity immunoglobulin gamma Fc region receptor III-A (275 aa).

Residues 1–23 (MSVWTSRKAAEDNDTSLSSGIRA) form the signal peptide. The Extracellular segment spans residues 24–207 (GLQKAVVTLH…SPSTFPPWHQ (184 aa)). Ig-like C2-type domains lie at 28–92 (AVVT…YTCQ) and 101–192 (PVNL…LRIT). 2 disulfides stabilise this stretch: Cys-49–Cys-91 and Cys-131–Cys-175. Residues Asn-65, Asn-168, and Asn-183 are each glycosylated (N-linked (GlcNAc...) asparagine). The helical transmembrane segment at 208-228 (ITFCLLIGLLFTIDTVMYFSV) threads the bilayer. Residues 229-275 (QKGLRRSTADYEEPEVHWSKEPENKTISEEKQSFRSSRANSETPENR) lie on the Cytoplasmic side of the membrane. Positions 237–275 (ADYEEPEVHWSKEPENKTISEEKQSFRSSRANSETPENR) are disordered. Tyr-239 carries the post-translational modification Phosphotyrosine. A compositionally biased stretch (basic and acidic residues) spans 242 to 261 (PEVHWSKEPENKTISEEKQS). Positions 262-275 (FRSSRANSETPENR) are enriched in polar residues.

As to quaternary structure, forms a heterooligomeric complex with ITAM-containing signaling subunits FCER1G. Interacts (via transmembrane domain) with signaling subunits; this interaction is a prerequisite for receptor complex expression on the cell surface and intracellular signal transduction. Binds the Fc region of antigen-complexed IgG. In terms of processing, N-glycosylated. Post-translationally, phosphorylated following receptor ligation.

Its subcellular location is the cell membrane. Functionally, receptor for the invariable Fc fragment of immunoglobulin gamma (IgG). Binds with intermediate affinity to both IgG2a and IgG2b. Can bind to IgG2a and IgG2b monomers. Does not display binding to IgG1 or IgG3. Recognizes neutralizing virus-specific IgGs displayed on the cell surface of infected cells and triggers antibody-dependent cellular cytotoxicity (ADCC). Confers protection to lethal influenza virus infection. On splenic dendritic cells, uptakes antigen immune complexes and efficiently divert them into MHC class I and II antigen presentation pathways to provide for superior priming of CD4-positive and CD8-positive T cell immune responses. Mediates neutrophil activation by IgG complexes redundantly with FCGR2A. Plays a role in promoting bone resorption by enhancing osteoclast differentiation following binding to IgG2a. Also acts as a receptor for the Fc region of immunoglobulin epsilon (IgE). Binds with low affinity to both the a and b allotypes of IgE. Has also been shown to bind to IgE allotype a only but not to allotype b. Binds aggregated IgE but not the monomeric form and bound monomeric IgG is readily displaced by IgE complexes. Binding to IgE promotes macrophage-mediated phagocytosis, antigen presentation to T cells, production of pro-inflammatory cytokines and the late phase of cutaneous allergic reactions. Mediates enhanced ADCC in response to afucosylated IgGs. The protein is Low affinity immunoglobulin gamma Fc region receptor III-A of Cricetulus griseus (Chinese hamster).